A 257-amino-acid chain; its full sequence is Paired box protein 1 homolog (257 aa).

Over residues 26 to 37 the composition is skewed to low complexity; the sequence is TTPSSTSTTPSS. A disordered region spans residues 26 to 58; that stretch reads TTPSSTSTTPSSDNGIQQYSSISTSSGYAPANS. Residues 38–52 are compositionally biased toward polar residues; the sequence is DNGIQQYSSISTSSG. Positions 61 to 187 form a DNA-binding region, paired; sequence KTAEVNQLGG…SSISRILRNK (127 aa). The tract at residues 64–120 is PAI subdomain; sequence EVNQLGGVFVNGRPLPFEMRCKIVELSRQGTRPCDISRQLKISHGCVSKILTRFSEN. The segment at 139-187 is RED subdomain; the sequence is KVVEYIRSLKRSDPGIFAWEIRDRLISADICDRANLPSVSSISRILRNK.

The protein localises to the nucleus. Its function is as follows. Transcription factor. May play a role in pharyngeal cell differentiation. May have a protective role in response to infection by the Gram-negative bacterium Vibrio cholerae. The sequence is that of Paired box protein 1 homolog from Caenorhabditis elegans.